The primary structure comprises 110 residues: UPF0060 membrane protein MMAR_2961 (110 aa).

The next 4 membrane-spanning stretches (helical) occupy residues 6 to 26, 32 to 52, 61 to 81, and 90 to 110; these read ILLF…VWQG, GLAW…VATL, ILAA…MAFD, and IVGA…PRAH.

The protein belongs to the UPF0060 family.

It is found in the cell membrane. This is UPF0060 membrane protein MMAR_2961 from Mycobacterium marinum (strain ATCC BAA-535 / M).